Consider the following 915-residue polypeptide: Isoleucine--tRNA ligase (915 aa).

The 'HIGH' region motif lies at 57-67 (PYANGNLHMGH). Residue glutamate 554 coordinates L-isoleucyl-5'-AMP. The 'KMSKS' region motif lies at 595 to 599 (KMSKS). Residue lysine 598 participates in ATP binding. Positions 885, 888, 905, and 908 each coordinate Zn(2+).

The protein belongs to the class-I aminoacyl-tRNA synthetase family. IleS type 1 subfamily. As to quaternary structure, monomer. It depends on Zn(2+) as a cofactor.

Its subcellular location is the cytoplasm. The catalysed reaction is tRNA(Ile) + L-isoleucine + ATP = L-isoleucyl-tRNA(Ile) + AMP + diphosphate. In terms of biological role, catalyzes the attachment of isoleucine to tRNA(Ile). As IleRS can inadvertently accommodate and process structurally similar amino acids such as valine, to avoid such errors it has two additional distinct tRNA(Ile)-dependent editing activities. One activity is designated as 'pretransfer' editing and involves the hydrolysis of activated Val-AMP. The other activity is designated 'posttransfer' editing and involves deacylation of mischarged Val-tRNA(Ile). The polypeptide is Isoleucine--tRNA ligase (Staphylococcus carnosus (strain TM300)).